The chain runs to 313 residues: Small ribosomal subunit protein uS2 (313 aa).

Basic and acidic residues predominate over residues 233–256 (RTMTDKQSDVAKEAKADGKEEAPK). Residues 233–293 (RTMTDKQSDV…SRKLVAAGTA (61 aa)) are disordered.

This sequence belongs to the universal ribosomal protein uS2 family.

The chain is Small ribosomal subunit protein uS2 from Bdellovibrio bacteriovorus (strain ATCC 15356 / DSM 50701 / NCIMB 9529 / HD100).